We begin with the raw amino-acid sequence, 533 residues long: Kelch-like protein 33 (533 aa).

Kelch repeat units lie at residues 210–258 (ALVV…ALPA), 273–322 (ELYV…ALDG), 323–369 (KLYA…ILEG), 371–418 (LYVS…ALGG), 419–465 (RLYV…VLQG), and 467–514 (LLVL…ILTL).

The protein is Kelch-like protein 33 (KLHL33) of Homo sapiens (Human).